The following is a 501-amino-acid chain: Ell-associated factor Eaf (501 aa).

Polar residues-rich tracts occupy residues 138-149 and 173-192; these read NMGQGQLHSQGA and ENST…SRRN. Disordered stretches follow at residues 138 to 226 and 256 to 501; these read NMGQ…PAWD and GHAN…DDDD. 2 stretches are compositionally biased toward low complexity: residues 200–221 and 256–270; these read RNSP…SPQS and GHAN…SATG. Phosphoserine is present on S202. Residues 271 to 283 are compositionally biased toward polar residues; sequence QTDFGSISSSSHI. Composition is skewed to low complexity over residues 302–314 and 329–343; these read QRQS…QQQP and QQQR…QRPP. Acidic residues predominate over residues 393–408; it reads DSSDSDSGSDSDDSTE. Composition is skewed to low complexity over residues 416 to 437, 455 to 471, and 483 to 501; these read QQPV…HLNQ, QQQQ…QKQQ, and NDLL…DDDD.

The protein belongs to the EAF family.

The protein resides in the nucleus. Functionally, promotes transcriptional elongation by Su(Tpl)/ELL. Essential for development. This is Ell-associated factor Eaf from Drosophila yakuba (Fruit fly).